The chain runs to 218 residues: 7-cyano-7-deazaguanine synthase (218 aa).

ATP is bound at residue 9 to 19 (FSGGMDSFTVL). Zn(2+)-binding residues include C185, C193, C196, and C199.

Belongs to the QueC family. It depends on Zn(2+) as a cofactor.

The enzyme catalyses 7-carboxy-7-deazaguanine + NH4(+) + ATP = 7-cyano-7-deazaguanine + ADP + phosphate + H2O + H(+). It functions in the pathway purine metabolism; 7-cyano-7-deazaguanine biosynthesis. In terms of biological role, catalyzes the ATP-dependent conversion of 7-carboxy-7-deazaguanine (CDG) to 7-cyano-7-deazaguanine (preQ(0)). In Pseudoalteromonas atlantica (strain T6c / ATCC BAA-1087), this protein is 7-cyano-7-deazaguanine synthase.